The sequence spans 215 residues: tRNA (guanine-N(7)-)-methyltransferase (215 aa).

Residues E44, E69, D96, and D118 each coordinate S-adenosyl-L-methionine. Residue D118 is part of the active site. Substrate-binding positions include K122, D154, and 192–195 (TEYE).

Belongs to the class I-like SAM-binding methyltransferase superfamily. TrmB family.

It carries out the reaction guanosine(46) in tRNA + S-adenosyl-L-methionine = N(7)-methylguanosine(46) in tRNA + S-adenosyl-L-homocysteine. It participates in tRNA modification; N(7)-methylguanine-tRNA biosynthesis. In terms of biological role, catalyzes the formation of N(7)-methylguanine at position 46 (m7G46) in tRNA. The protein is tRNA (guanine-N(7)-)-methyltransferase of Levilactobacillus brevis (strain ATCC 367 / BCRC 12310 / CIP 105137 / JCM 1170 / LMG 11437 / NCIMB 947 / NCTC 947) (Lactobacillus brevis).